Consider the following 212-residue polypeptide: MNGLFITFEGPEGAGKTTILQAAADQLTKNGHSVLATREPGGIEISERIREVILNPSHTAMDPKTEALLYAAARRQHLVEKVKPALEEGKIVLCDRFIDSSLAYQGYARGLGIDEVFSVNQFAIGSLMPNVTIYFDIDPEEGIKRIDLNDAREKNRLDLEKLHFHQLVQKGYEEVMNRFPGRFRIVDASQSVELVLKRVNNIIEEALKENQL.

An ATP-binding site is contributed by 10-17 (GPEGAGKT).

This sequence belongs to the thymidylate kinase family.

It carries out the reaction dTMP + ATP = dTDP + ADP. Phosphorylation of dTMP to form dTDP in both de novo and salvage pathways of dTTP synthesis. The sequence is that of Thymidylate kinase from Bacillus licheniformis (strain ATCC 14580 / DSM 13 / JCM 2505 / CCUG 7422 / NBRC 12200 / NCIMB 9375 / NCTC 10341 / NRRL NRS-1264 / Gibson 46).